The chain runs to 241 residues: Histidine-rich protein PFHRP-III (241 aa).

The first 21 residues, 1–21 (MVSFSKNKVLSAAVFASVLLL), serve as a signal peptide directing secretion. Positions 52–76 (AHAGDAHHAHHVADAHHAHHVADAH) are enriched in basic and acidic residues. 2 disordered regions span residues 52–145 (AHAG…ANAH) and 195–241 (AHHD…HLHH). The segment covering 84–145 (AHHAANAHHA…ANAHHAANAH (62 aa)) has biased composition (low complexity). Over residues 195–231 (AHHDGAHHDDAHHDGAHHDDAHHDGAHHDGAHHDGAH) the composition is skewed to basic and acidic residues.

The protein is Histidine-rich protein PFHRP-III of Plasmodium falciparum.